The following is a 719-amino-acid chain: Eukaryotic translation initiation factor 3 subunit B (719 aa).

The RRM domain maps to 60–147; it reads NILVVDNLPV…HIFAVNMFDD (88 aa). WD repeat units follow at residues 167–207, 511–553, and 555–598; these read VPGE…KPEL, LKGK…TMAS, and EHFM…LYRI. Basic and acidic residues predominate over residues 675 to 686; the sequence is EKMERQKLRDGE. Positions 675 to 698 are disordered; that stretch reads EKMERQKLRDGEASDEEEEYEAKE. The span at 687-698 shows a compositional bias: acidic residues; sequence ASDEEEEYEAKE.

The protein belongs to the eIF-3 subunit B family. Component of the eukaryotic translation initiation factor 3 (eIF-3) complex.

Its subcellular location is the cytoplasm. Functionally, RNA-binding component of the eukaryotic translation initiation factor 3 (eIF-3) complex, which is involved in protein synthesis of a specialized repertoire of mRNAs and, together with other initiation factors, stimulates binding of mRNA and methionyl-tRNAi to the 40S ribosome. The eIF-3 complex specifically targets and initiates translation of a subset of mRNAs involved in cell proliferation. This chain is Eukaryotic translation initiation factor 3 subunit B (TIF3B1), found in Nicotiana tabacum (Common tobacco).